A 398-amino-acid chain; its full sequence is Succinate--CoA ligase [ADP-forming] subunit beta (398 aa).

The ATP-grasp domain occupies 9 to 253 (KEILNSFGVR…VREENATEVE (245 aa)). Residues Lys50, 57–59 (GRG), Val106, and Glu116 each bind ATP. Positions 208 and 222 each coordinate Mg(2+). Residues Asn273 and 330–332 (GIV) contribute to the substrate site.

Belongs to the succinate/malate CoA ligase beta subunit family. In terms of assembly, heterotetramer of two alpha and two beta subunits. Mg(2+) serves as cofactor.

It carries out the reaction succinate + ATP + CoA = succinyl-CoA + ADP + phosphate. The enzyme catalyses GTP + succinate + CoA = succinyl-CoA + GDP + phosphate. The protein operates within carbohydrate metabolism; tricarboxylic acid cycle; succinate from succinyl-CoA (ligase route): step 1/1. Succinyl-CoA synthetase functions in the citric acid cycle (TCA), coupling the hydrolysis of succinyl-CoA to the synthesis of either ATP or GTP and thus represents the only step of substrate-level phosphorylation in the TCA. The beta subunit provides nucleotide specificity of the enzyme and binds the substrate succinate, while the binding sites for coenzyme A and phosphate are found in the alpha subunit. The chain is Succinate--CoA ligase [ADP-forming] subunit beta from Christiangramia forsetii (strain DSM 17595 / CGMCC 1.15422 / KT0803) (Gramella forsetii).